Consider the following 354-residue polypeptide: Homer protein homolog 1 (354 aa).

The region spanning 1–110 (MGEQPIFSTR…EKFQEFKEAA (110 aa)) is the WH1 domain. G2 bears the N-acetylglycine mark. The interval 114–173 (KEKSQEKMELTSTPSQESAGGDLQSPLTPESINGTDDERTPDVTQNSEPRAEPTQNALPF) is disordered. 2 stretches are compositionally biased toward polar residues: residues 138–147 (SPLTPESING) and 155–173 (DVTQ…ALPF). A coiled-coil region spans residues 181-352 (KHWEAELATL…LRDNLAKLLE (172 aa)). Residues 290–354 (KLQEVEIRNK…DNLAKLLECS (65 aa)) are required for tetramerization. S306 bears the Phosphoserine mark.

It belongs to the Homer family. Tetramer; this tetrameric structure is critical for forming the high-order complex with SHANK1, which in turn is necessary for the structural and functional integrity of dendritic spines. Interacts with GRM1, GRM5, ITPR1, DNM3, RYR1, RYR2 and SHANK3. Interacts with IFT57 and OPHN1. Isoform 1 encodes a coiled-coil structure that mediates homo- and heteromultimerization. Interacts with SHANK1; forms high-order polymerized complex with a mesh-like network structure, at least composed of SHANK1, HOMER1 and DLGAP1; the complex formation is SHANK1 multimerization dependent. Interacts with NFATC4. Interacts with DAGLA (via PPXXF motif); this interaction is required for the cell membrane localization of DAGLA. Interacts with SRGAP2.

The protein resides in the cytoplasm. It localises to the postsynaptic density. It is found in the synapse. The protein localises to the cell projection. Its subcellular location is the dendritic spine. In terms of biological role, postsynaptic density scaffolding protein. Binds and cross-links cytoplasmic regions of GRM1, GRM5, ITPR1, DNM3, RYR1, RYR2, SHANK1 and SHANK3. By physically linking GRM1 and GRM5 with ER-associated ITPR1 receptors, it aids the coupling of surface receptors to intracellular calcium release. May also couple GRM1 to PI3 kinase through its interaction with AGAP2. Isoform 1 regulates the trafficking and surface expression of GRM5. Isoform 3 acts as a natural dominant negative, in dynamic competition with constitutively expressed isoform 1 to regulate synaptic metabotropic glutamate function. Isoform 3, may be involved in the structural changes that occur at synapses during long-lasting neuronal plasticity and development. Forms a high-order complex with SHANK1, which in turn is necessary for the structural and functional integrity of dendritic spines. Negatively regulates T cell activation by inhibiting the calcineurin-NFAT pathway. Acts by competing with calcineurin/PPP3CA for NFAT protein binding, hence preventing NFAT activation by PPP3CA. In Homo sapiens (Human), this protein is Homer protein homolog 1.